Here is a 221-residue protein sequence, read N- to C-terminus: Eukaryotic translation initiation factor NCBP (221 aa).

Belongs to the eukaryotic initiation factor 4E family. EIF4F is a multi-subunit complex, the composition of which varies with external and internal environmental conditions. It is composed of at least EIF4A, EIF4E and EIF4G. EIF4E is also known to interact with other partners. In higher plants two isoforms of EIF4F have been identified, named isoform EIF4F and isoform EIF(iso)4F. Isoform EIF4F has subunits p220 and p26, whereas isoform EIF(iso)4F has subunits p82 and p28.

In terms of biological role, recognizes and binds the 7-methylguanosine-containing mRNA cap during an early step in the initiation of protein synthesis and facilitates ribosome binding by inducing the unwinding of the mRNAs secondary structures. The polypeptide is Eukaryotic translation initiation factor NCBP (NCBP) (Arabidopsis thaliana (Mouse-ear cress)).